The sequence spans 179 residues: Large ribosomal subunit protein uL5 (179 aa).

It belongs to the universal ribosomal protein uL5 family. As to quaternary structure, part of the 50S ribosomal subunit; part of the 5S rRNA/L5/L18/L25 subcomplex. Contacts the 5S rRNA and the P site tRNA. Forms a bridge to the 30S subunit in the 70S ribosome.

This is one of the proteins that bind and probably mediate the attachment of the 5S RNA into the large ribosomal subunit, where it forms part of the central protuberance. In the 70S ribosome it contacts protein S13 of the 30S subunit (bridge B1b), connecting the 2 subunits; this bridge is implicated in subunit movement. Contacts the P site tRNA; the 5S rRNA and some of its associated proteins might help stabilize positioning of ribosome-bound tRNAs. This Herpetosiphon aurantiacus (strain ATCC 23779 / DSM 785 / 114-95) protein is Large ribosomal subunit protein uL5.